The sequence spans 256 residues: Small ribosomal subunit protein eS1 (256 aa).

The span at 1–18 (MAVGKNKRLSKGKKGIKK) shows a compositional bias: basic residues. Positions 1-20 (MAVGKNKRLSKGKKGIKKRT) are disordered. Ala-2 carries the post-translational modification N-acetylalanine; partial.

Belongs to the eukaryotic ribosomal protein eS1 family. As to quaternary structure, component of the small ribosomal subunit. Mature ribosomes consist of a small (40S) and a large (60S) subunit. The 40S subunit contains about 33 different proteins and 1 molecule of RNA (18S). The 60S subunit contains about 49 different proteins and 3 molecules of RNA (25S, 5.8S and 5S).

The protein localises to the cytoplasm. This Aspergillus flavus (strain ATCC 200026 / FGSC A1120 / IAM 13836 / NRRL 3357 / JCM 12722 / SRRC 167) protein is Small ribosomal subunit protein eS1 (rps1).